Here is a 632-residue protein sequence, read N- to C-terminus: Probable membrane transporter protein MamO (632 aa).

The chain crosses the membrane as a helical span at residues 25–45; it reads APVSILAFLILVTFAWGAYLL. The interval 78-268 is protease-like; sequence LYYTVPPAVV…VIVSHLQDVV (191 aa). Residues H148 and H263 each contribute to the a divalent metal cation site. A run of 7 helical transmembrane segments spans residues 340–360, 412–432, 434–454, 513–533, 550–570, 582–602, and 612–632; these read IGGY…AAGV, LVQW…VVIG, FIGN…FALI, AVLG…GGVI, IANS…VAFI, APVT…ILGA, and VLKG…LTTV. Residues 365-632 are TSUP-like; the sequence is MTMGGGVLQV…AIAIKMLTTV (268 aa).

The protein in the N-terminal section; belongs to the peptidase S1C family. It in the C-terminal section; belongs to the 4-toluene sulfonate uptake permease (TSUP) (TC 2.A.102) family. It depends on a metal cation as a cofactor. Post-translationally, subject to proteolytic cleavage by MamE.

The protein localises to the magnetosome membrane. Plays 2 roles; promotes magnetite nucleation/formation and activates the MamE protease. Despite its near conservation of a protease-like sequence, this is probably not a protease. Required in conjunction with MamP for proteolysis of at least MamE, itself and MamP. May transport a solute that controls MamE's protease activity. May place individual iron atoms into the magnetite lattice. One of 7 genes (mamLQBIEMO) able to induce magnetosome membrane biogenesis; coexpression of mamLQRBIEMO in a deletion of the 17 gene mamAB operon restores magnetosome vesicle formation but not magnetite biosynthesis. In Magnetospirillum gryphiswaldense (strain DSM 6361 / JCM 21280 / NBRC 15271 / MSR-1), this protein is Probable membrane transporter protein MamO.